The sequence spans 379 residues: UDP-4-amino-4-deoxy-L-arabinose--oxoglutarate aminotransferase (379 aa).

The residue at position 182 (lysine 182) is an N6-(pyridoxal phosphate)lysine.

The protein belongs to the DegT/DnrJ/EryC1 family. ArnB subfamily. As to quaternary structure, homodimer. The cofactor is pyridoxal 5'-phosphate.

The enzyme catalyses UDP-4-amino-4-deoxy-beta-L-arabinose + 2-oxoglutarate = UDP-beta-L-threo-pentopyranos-4-ulose + L-glutamate. It functions in the pathway nucleotide-sugar biosynthesis; UDP-4-deoxy-4-formamido-beta-L-arabinose biosynthesis; UDP-4-deoxy-4-formamido-beta-L-arabinose from UDP-alpha-D-glucuronate: step 2/3. It participates in bacterial outer membrane biogenesis; lipopolysaccharide biosynthesis. In terms of biological role, catalyzes the conversion of UDP-4-keto-arabinose (UDP-Ara4O) to UDP-4-amino-4-deoxy-L-arabinose (UDP-L-Ara4N). The modified arabinose is attached to lipid A and is required for resistance to polymyxin and cationic antimicrobial peptides. The protein is UDP-4-amino-4-deoxy-L-arabinose--oxoglutarate aminotransferase of Salmonella agona (strain SL483).